Reading from the N-terminus, the 429-residue chain is Divergent protein kinase domain 2A (429 aa).

The signal sequence occupies residues 1 to 34; sequence MLRLASLKFGRLFRYAKVLFAASLLVVMLLNTHS.

It belongs to the DIPK family.

The protein localises to the cytoplasmic vesicle. Its subcellular location is the COPI-coated vesicle. It is found in the golgi apparatus. The protein resides in the secreted. May play a role in cardiomyocyte proliferation through paracrine signaling and activation of the PPI3K-AKT-CDK7 signaling cascade. The protein is Divergent protein kinase domain 2A (dipk2a) of Xenopus tropicalis (Western clawed frog).